A 255-amino-acid chain; its full sequence is Probable UDP-N-acetylglucosamine pyrophosphorylase (255 aa).

The catalysed reaction is N-acetyl-alpha-D-glucosamine 1-phosphate + UTP + H(+) = UDP-N-acetyl-alpha-D-glucosamine + diphosphate. It functions in the pathway nucleotide-sugar biosynthesis; UDP-N-acetyl-alpha-D-glucosamine biosynthesis; UDP-N-acetyl-alpha-D-glucosamine from N-acetyl-alpha-D-glucosamine 1-phosphate: step 1/1. This chain is Probable UDP-N-acetylglucosamine pyrophosphorylase, found in Acanthamoeba polyphaga (Amoeba).